A 626-amino-acid chain; its full sequence is Elongation factor 4 (626 aa).

A tr-type G domain is found at 14–195; sequence SVIRNFCIIA…QIVMDVPAPH (182 aa). GTP is bound by residues 26-31 and 142-145; these read DHGKST and NKID. The segment at 603 to 626 is disordered; it reads LSTGEDSNDRDTKDKIRAAQKTEG. The segment covering 609 to 626 has biased composition (basic and acidic residues); the sequence is SNDRDTKDKIRAAQKTEG.

The protein belongs to the TRAFAC class translation factor GTPase superfamily. Classic translation factor GTPase family. LepA subfamily.

The protein resides in the cell membrane. It catalyses the reaction GTP + H2O = GDP + phosphate + H(+). Required for accurate and efficient protein synthesis under certain stress conditions. May act as a fidelity factor of the translation reaction, by catalyzing a one-codon backward translocation of tRNAs on improperly translocated ribosomes. Back-translocation proceeds from a post-translocation (POST) complex to a pre-translocation (PRE) complex, thus giving elongation factor G a second chance to translocate the tRNAs correctly. Binds to ribosomes in a GTP-dependent manner. This chain is Elongation factor 4, found in Bifidobacterium longum (strain DJO10A).